A 476-amino-acid chain; its full sequence is MAQPANQVGRITQVIGAVVDVQFDGYLPAILNAIETTNQGHRLVLEVAQHLGESTVRAIAMDTTEGLVRGQEVTDTGAPIKVPVGEGTLGRIMNVVGEPVDEGGPVKADGTRAIHQEAPAYTEQSTEAEILVTGIKVVDLLAPYAKGGKIGLFGGAGVGKTVLIQELINNVAKAHGGYSVFAGVGERTREGNDLYHEFIESGVNKKGGGEGSKCALVYGQMNEPPGARARVGLTGLTVAEHFRDQGQDVLFFVDNIFRFTQAGSEVSALLGRIPSAVGYQPTLATDMGALQERITTTTKGSITSVQAIYVPADDLTDPAPATSFAHLDATTVLNRAISEKGIYPAVDPLDSTSRMLSPLVVGEEHYQTARMVQQVLQRYKSLQDIIAILGMDELSEEDKLTVARARKIERFLSQPFHVAEVFTGSPGKFVELADTIKGFKGLCEGKYDHLPEAAFYMVGTIEEAVEKGKKLAAEAA.

Residue 154–161 (GGAGVGKT) coordinates ATP.

The protein belongs to the ATPase alpha/beta chains family. As to quaternary structure, F-type ATPases have 2 components, CF(1) - the catalytic core - and CF(0) - the membrane proton channel. CF(1) has five subunits: alpha(3), beta(3), gamma(1), delta(1), epsilon(1). CF(0) has three main subunits: a(1), b(2) and c(9-12). The alpha and beta chains form an alternating ring which encloses part of the gamma chain. CF(1) is attached to CF(0) by a central stalk formed by the gamma and epsilon chains, while a peripheral stalk is formed by the delta and b chains.

The protein resides in the cell inner membrane. It carries out the reaction ATP + H2O + 4 H(+)(in) = ADP + phosphate + 5 H(+)(out). Its function is as follows. Produces ATP from ADP in the presence of a proton gradient across the membrane. The catalytic sites are hosted primarily by the beta subunits. The polypeptide is ATP synthase subunit beta (Afipia carboxidovorans (strain ATCC 49405 / DSM 1227 / KCTC 32145 / OM5) (Oligotropha carboxidovorans)).